We begin with the raw amino-acid sequence, 358 residues long: Protein PXR1 (358 aa).

Disordered stretches follow at residues 1-26 (MGLAAPKNRSKISNDPQNTTWANNTS) and 146-342 (EVKT…KSAT). Residues 11–26 (KISNDPQNTTWANNTS) are compositionally biased toward polar residues. A G-patch domain is found at 25–79 (TSRFGHRILTSQGWQPGDSLGASDAAHAAHYTVASQSHIRVLLKDDNLGLGAKRG). Basic and acidic residues-rich tracts occupy residues 146-171 (EVKTETQAKVEVKSEPESDGAKEDDR) and 199-217 (SMDLRDQAKKDIAAESSKD). Positions 218-227 (KKGKKSKKDK) are enriched in basic residues. The span at 287–299 (DVEDLSSESEDES) shows a compositional bias: acidic residues. Residues 300 to 315 (TPSASRPATGTSTPTV) show a composition bias toward polar residues. Residues 328–339 (HSVRQKWIRSKK) are compositionally biased toward basic residues.

The protein belongs to the PINX1 family.

The protein resides in the nucleus. It is found in the nucleolus. Involved in rRNA-processing at A0, A1 and A2 sites and negatively regulates telomerase. This chain is Protein PXR1 (PXR1), found in Phaeosphaeria nodorum (strain SN15 / ATCC MYA-4574 / FGSC 10173) (Glume blotch fungus).